The following is a 326-amino-acid chain: Lipoyl synthase (326 aa).

7 residues coordinate [4Fe-4S] cluster: C74, C79, C85, C100, C104, C107, and S314. The Radical SAM core domain maps to 85–303; that stretch reads CFGKGTATFM…EEEAYKMGFT (219 aa).

It belongs to the radical SAM superfamily. Lipoyl synthase family. [4Fe-4S] cluster serves as cofactor.

The protein localises to the cytoplasm. It carries out the reaction [[Fe-S] cluster scaffold protein carrying a second [4Fe-4S](2+) cluster] + N(6)-octanoyl-L-lysyl-[protein] + 2 oxidized [2Fe-2S]-[ferredoxin] + 2 S-adenosyl-L-methionine + 4 H(+) = [[Fe-S] cluster scaffold protein] + N(6)-[(R)-dihydrolipoyl]-L-lysyl-[protein] + 4 Fe(3+) + 2 hydrogen sulfide + 2 5'-deoxyadenosine + 2 L-methionine + 2 reduced [2Fe-2S]-[ferredoxin]. It functions in the pathway protein modification; protein lipoylation via endogenous pathway; protein N(6)-(lipoyl)lysine from octanoyl-[acyl-carrier-protein]: step 2/2. Catalyzes the radical-mediated insertion of two sulfur atoms into the C-6 and C-8 positions of the octanoyl moiety bound to the lipoyl domains of lipoate-dependent enzymes, thereby converting the octanoylated domains into lipoylated derivatives. In Delftia acidovorans (strain DSM 14801 / SPH-1), this protein is Lipoyl synthase.